We begin with the raw amino-acid sequence, 213 residues long: Protein Nef (213 aa).

A lipid anchor (N-myristoyl glycine; by host) is attached at Gly2. Positions 68 to 71 (QEEE) are acidic; interacts with host PACS1 and PACS2; stabilizes the interaction of NEF/MHC-I with host AP1M1; necessary for MHC-I internalization. Residues 75-84 (PVAPQVPLRP) are SH3-binding; interaction with Src family tyrosine kinases. Positions 78 to 81 (PQVP) match the PxxP; stabilizes the interaction of NEF/MHC-I with host AP1M1; necessary for MHC-I internalization motif. The mediates dimerization, Nef-PTE1 interaction stretch occupies residues 114 to 130 (EILDLWVYNTQGFFPDW). Residues 154-187 (VSEEEAERLGNTCERANLLHPACAHGFEDTHKEI) form a binding to ATP6V1H region. Positions 171 to 172 (LL) match the Dileucine internalization motif; necessary for CD4 internalization motif. Positions 181–182 (ED) match the Diacidic; necessary for CD4 internalization motif.

Belongs to the lentivirus primate group Nef protein family. Monomer; cytosolic form. Homodimer; membrane bound form. Interacts with Nef associated p21-activated kinase (PAK2); this interaction activates PAK2. Associates with the Nef-MHC-I-AP1 complex; this complex is required for MHC-I internalization. Interacts (via C-terminus) with host PI3-kinase. Interacts with host PACS1; this interaction seems to be weak. Interacts with host PACS2. Interacts with host LCK and MAPK3; these interactions inhibit the kinase activity of the latter. Interacts with host ATP6V1H; this interaction may play a role in CD4 endocytosis. Associates with the CD4-Nef-AP2 complex; this complex is required for CD4 internalization. Interacts with host AP2 subunit alpha and AP2 subunit sigma2. Interacts with TCR-zeta chain; this interaction up-regulates the Fas ligand (FasL) surface expression. Interacts with host HCK, LYN, and SRC; these interactions activate the Src family kinases. Interacts with MAP3K5; this interaction inhibits the Fas and TNFR-mediated death signals. Interacts with beta-COP and PTE1. Interacts with human RACK1; this increases Nef phosphorylation by PKC. Interacts with TP53; this interaction decreases the half-life of TP53, protecting the infected cell against p53-mediated apoptosis. The virion-associated Nef proteins are cleaved by the viral protease to release the soluble C-terminal core protein. Nef is probably cleaved concomitantly with viral structural proteins on maturation of virus particles. Post-translationally, myristoylated. In terms of processing, phosphorylated on serine residues, probably by host PKCdelta and theta.

The protein localises to the host cell membrane. Its subcellular location is the virion. The protein resides in the secreted. It localises to the host Golgi apparatus membrane. In terms of biological role, factor of infectivity and pathogenicity, required for optimal virus replication. Alters numerous pathways of T-lymphocyte function and down-regulates immunity surface molecules in order to evade host defense and increase viral infectivity. Alters the functionality of other immunity cells, like dendritic cells, monocytes/macrophages and NK cells. In infected CD4(+) T-lymphocytes, down-regulates the surface MHC-I, mature MHC-II, CD4, CD28, CCR5 and CXCR4 molecules. Mediates internalization and degradation of host CD4 through the interaction of with the cytoplasmic tail of CD4, the recruitment of AP-2 (clathrin adapter protein complex 2), internalization through clathrin coated pits, and subsequent transport to endosomes and lysosomes for degradation. Diverts host MHC-I molecules to the trans-Golgi network-associated endosomal compartments by an endocytic pathway to finally target them for degradation. MHC-I down-regulation may involve AP-1 (clathrin adapter protein complex 1) or possibly Src family kinase-ZAP70/Syk-PI3K cascade recruited by PACS2. In consequence infected cells are masked for immune recognition by cytotoxic T-lymphocytes. Decreasing the number of immune receptors also prevents reinfection by more HIV particles (superinfection). Down-regulates host SERINC3 and SERINC5 thereby excluding these proteins from the viral particles. Virion infectivity is drastically higher when SERINC3 or SERINC5 are excluded from the viral envelope, because these host antiviral proteins impair the membrane fusion event necessary for subsequent virion penetration. Functionally, bypasses host T-cell signaling by inducing a transcriptional program nearly identical to that of anti-CD3 cell activation. Interaction with TCR-zeta chain up-regulates the Fas ligand (FasL). Increasing surface FasL molecules and decreasing surface MHC-I molecules on infected CD4(+) cells send attacking cytotoxic CD8+ T-lymphocytes into apoptosis. Its function is as follows. Plays a role in optimizing the host cell environment for viral replication without causing cell death by apoptosis. Protects the infected cells from apoptosis in order to keep them alive until the next virus generation is ready to strike. Inhibits the Fas and TNFR-mediated death signals by blocking MAP3K5/ASK1. Decreases the half-life of TP53, protecting the infected cell against p53-mediated apoptosis. Inhibits the apoptotic signals regulated by the Bcl-2 family proteins through the formation of a Nef/PI3-kinase/PAK2 complex that leads to activation of PAK2 and induces phosphorylation of host BAD. In terms of biological role, extracellular Nef protein targets CD4(+) T-lymphocytes for apoptosis by interacting with CXCR4 surface receptors. This is Protein Nef from Human immunodeficiency virus type 1 group O (isolate ANT70) (HIV-1).